The sequence spans 315 residues: Prephenate dehydratase (315 aa).

In terms of domain architecture, Prephenate dehydratase spans 3–189; it reads RIAYLGPEGT…ARTRFLLIGV (187 aa). The region spanning 203 to 280 is the ACT domain; that stretch reads SVVLRIANVP…ADVRYLGSWP (78 aa).

As to quaternary structure, homodimer.

The catalysed reaction is prephenate + H(+) = 3-phenylpyruvate + CO2 + H2O. It functions in the pathway amino-acid biosynthesis; L-phenylalanine biosynthesis; phenylpyruvate from prephenate: step 1/1. This is Prephenate dehydratase (pheA) from Mycobacterium marinum (strain ATCC BAA-535 / M).